Reading from the N-terminus, the 427-residue chain is O-methyltransferase PaMT (427 aa).

Residues W230 and D281 each contribute to the S-adenosyl-L-methionine site. H326 serves as the catalytic Proton acceptor.

Belongs to the class I-like SAM-binding methyltransferase superfamily. Cation-independent O-methyltransferase family. COMT subfamily. S-adenosyl-L-methionine is required as a cofactor.

The protein operates within mycotoxin biosynthesis. Functionally, O-methyltransferase; part of the 2 gene clusters that mediate the biosynthesis of fusicoccins, diterpene glucosides that display phytohormone-like activity and function as potent activators of plasma membrane H(+)-ATPases in plants by modifying 14-3-3 proteins and cause the plant disease constriction canker. The first step in the pathway is performed by the fusicoccadiene synthase PaFS that possesses both prenyl transferase and terpene cyclase activity, converting isopentenyl diphosphate and dimethylallyl diphosphate into geranylgeranyl diphosphate (GGDP) and successively converting GGDP into fusicocca-2,10(14)-diene, a precursor for fusicoccin H. The second step is the oxidation at the C-8 position by the cytochrome P450 monooxygenase PaP450-2 to yield fusicocca-2,10(14)-diene-8-beta-ol. The cytochrome P450 monooxygenase PaP450-1 then catalyzes the hydroxylation at the C-16 position to produce fusicocca-2,10(14)-diene-8-beta,16-diol. The dioxygenase fc-dox then catalyzes the 16-oxydation of fusicocca-2,10(14)-diene-8-beta,16-diol to yield an aldehyde (8-beta-hydroxyfusicocca-1,10(14)-dien-16-al). The short-chain dehydrogenase/reductase fc-sdr catalyzes the reduction of the aldehyde to yield fusicocca-1,10(14)-diene-8-beta,16-diol. The next step is the hydroxylation at C-9 performed by the cytochrome P450 monooxygenase PaP450-3 that leads to fusicoccin H aglycon which is glycosylated to fusicoccin H by the O-glycosyltransferase PaGT. Hydroxylation at C-12 by the cytochrome P450 monooxygenase PaP450-4 leads then to the production of fusicoccin Q and is followed by methylation by the O-methyltransferase PaMT to yield fusicoccin P. Fusicoccin P is further converted to fusicoccin J via prenylation by the O-glucose prenyltransferase PaPT. Cytochrome P450 monooxygenase PaP450-5 then performs hydroxylation at C-19 to yield dideacetyl-fusicoccin A which is acetylated to 3'-O-deacetyl-fusicoccin A by the O-acetyltransferase PaAT-2. Finally, a another acetylation by the O-acetyltransferase PaAT-1 yields fusicoccin A. The protein is O-methyltransferase PaMT of Phomopsis amygdali (Fusicoccum amygdali).